We begin with the raw amino-acid sequence, 523 residues long: GMP synthase [glutamine-hydrolyzing] (523 aa).

The Glutamine amidotransferase type-1 domain maps to 8 to 205; that stretch reads KILILDFGSQ…VVNICGCETK (198 aa). Cysteine 85 (nucleophile) is an active-site residue. Active-site residues include histidine 179 and glutamate 181. One can recognise a GMPS ATP-PPase domain in the interval 206 to 398; the sequence is WTAENIIEDA…LGLPAEMINR (193 aa). An ATP-binding site is contributed by 233-239; the sequence is SGGVDSS.

In terms of assembly, homodimer.

The enzyme catalyses XMP + L-glutamine + ATP + H2O = GMP + L-glutamate + AMP + diphosphate + 2 H(+). The protein operates within purine metabolism; GMP biosynthesis; GMP from XMP (L-Gln route): step 1/1. Functionally, catalyzes the synthesis of GMP from XMP. The polypeptide is GMP synthase [glutamine-hydrolyzing] (Haemophilus influenzae (strain 86-028NP)).